A 629-amino-acid polypeptide reads, in one-letter code: Replication protein A 70 kDa DNA-binding subunit D (629 aa).

The disordered stretch occupies residues 112 to 135 (LDSKSGEEEAREPKKQKLEHSPVS). Positions 115 to 131 (KSGEEEAREPKKQKLEH) are enriched in basic and acidic residues. The OB DNA-binding region spans 194–280 (WTIKVRVTNK…QNDYEMTLNE (87 aa)). The C4-type zinc finger occupies 492–512 (CKTCNKKVTEALDSGYWCEGC).

This sequence belongs to the replication factor A protein 1 family. Heterotrimer of RPA1, RPA2 and RPA3 (canonical replication protein A complex).

It localises to the nucleus. Component of the replication protein A complex (RPA) required for DNA recombination, repair and replication. The activity of RPA is mediated by single-stranded DNA binding and protein interactions. Probably involved in repair of double-strand DNA breaks (DSBs) induced by genotoxic stresses. This chain is Replication protein A 70 kDa DNA-binding subunit D (RPA1D), found in Arabidopsis thaliana (Mouse-ear cress).